The sequence spans 699 residues: MSSGESHQEQLSQSDPSPSPNSCSSFELIDMDASSSYEPVSPHWFYCKVLDSKELWIPFNSEDSQQLEDAYGSGKDCNERIVPTDGGRYDVHLGERMRYAVYWDELPSEVRRCTWFYKGDKDNKYVPYSESFSQVLEDTYMLAVTLDEWKKKIESPNREIIVLHNPKLMVHYQPIAGSDEWGSTSTEQGRPRSVKRGVENIPVDIHCGEPLQIDHLVFVVHGIGPACDLRFRSIVQCVNDFRSVSLNLLQTHFKKAQENEQIGRVEFLPVNWHSPLHSTGVDIDLQRITLPSINRLRHFTNDTILDVFFYNSPTYCQTIVDTVASEMNRIYTLFLQRNPDFKGGVSIAGHSLGSLILFDILTNQKNSIGDIDSEKGSLSSAEDRGDASTLEEDLKKLQLSEFVTVFEKEKVDREALALCTDRDLQEMGIPLGPRKKILNHFSARKNSVSINRPAMSASEVNISKENGDYLDVGIGQVSVKYPRLNYKPEIFFAFGSPIGMFLTVRGLRRIDPNYKFPTCKGFFNIYHPFDPVAYRIEPMVAPGIEFEPMLIPHHKGRKRMHLELREGLTRMSMDLKNNLLGSLRMAWKSFTRGPYPALQASETAEETEAEPESSSEKSNEANTEEPPVEVKEEAPISVGMLNGGQRIDYVLQEKPIESFNEYLFALQSHLCYWESEDTVLLVLKEIYQTQGVFLDQPLQ.

Over residues 1–11 (MSSGESHQEQL) the composition is skewed to polar residues. Positions 1-25 (MSSGESHQEQLSQSDPSPSPNSCSS) are disordered. Residues 12 to 25 (SQSDPSPSPNSCSS) are compositionally biased toward low complexity. The 83-residue stretch at 30–112 (DMDASSSYEP…WDELPSEVRR (83 aa)) folds into the WWE domain. The active-site Nucleophile is the Ser-351. An SAM domain is found at 383 to 445 (DRGDASTLEE…KILNHFSARK (63 aa)). Position 447 is a phosphoserine (Ser-447). The DDHD domain maps to 484–688 (LNYKPEIFFA…VLLVLKEIYQ (205 aa)). The segment at 599 to 635 (QASETAEETEAEPESSSEKSNEANTEEPPVEVKEEAP) is disordered. Residues 603 to 613 (TAEETEAEPES) are compositionally biased toward acidic residues.

The protein belongs to the PA-PLA1 family. Forms homooligomers and, to a much smaller extent, heterooligomers with DDHD1.

The protein localises to the cytoplasm. It localises to the cytosol. The protein resides in the endoplasmic reticulum-Golgi intermediate compartment. Its subcellular location is the golgi apparatus. It is found in the cis-Golgi network. It carries out the reaction a triacylglycerol + H2O = a diacylglycerol + a fatty acid + H(+). The enzyme catalyses a diacylglycerol + H2O = a monoacylglycerol + a fatty acid + H(+). It catalyses the reaction a 1,3-diacylglycerol + H2O = a 1-acylglycerol + a fatty acid + H(+). The catalysed reaction is a 1-acylglycerol + H2O = glycerol + a fatty acid + H(+). It carries out the reaction 1,2,3-tri-(9Z-octadecenoyl)-glycerol + H2O = di-(9Z)-octadecenoylglycerol + (9Z)-octadecenoate + H(+). The enzyme catalyses di-(9Z)-octadecenoylglycerol + H2O = (9Z-octadecenoyl)-glycerol + (9Z)-octadecenoate + H(+). It catalyses the reaction 1,3-di-(9Z-octadecenoyl)-glycerol + H2O = 1-(9Z-octadecenoyl)-glycerol + (9Z)-octadecenoate + H(+). The catalysed reaction is trihexadecanoylglycerol + H2O = dihexadecanoylglycerol + hexadecanoate + H(+). It carries out the reaction 1,2-di-(9Z-octadecenoyl)-sn-glycero-3-phosphocholine + H2O = (9Z-octadecenoyl)-sn-glycero-3-phosphocholine + (9Z)-octadecenoate + H(+). The enzyme catalyses 1-(9Z-octadecenoyl)-glycerol + H2O = glycerol + (9Z)-octadecenoate + H(+). It catalyses the reaction 1,2-di-(9Z-octadecenoyl)-sn-glycero-3-phosphate + H2O = 2-(9Z-octadecenoyl)-sn-glycero-3-phosphate + (9Z)-octadecenoate + H(+). The catalysed reaction is 1-hexadecanoyl-2-(9Z-octadecenoyl)-sn-glycero-3-phosphate + H2O = 2-(9Z-octadecenoyl)-sn-glycero-3-phosphate + hexadecanoate + H(+). It carries out the reaction 1-hexadecanoyl-2-(9Z-octadecenoyl)-sn-glycero-3-phosphoethanolamine + H2O = 2-(9Z-octadecenoyl)-sn-glycero-3-phosphoethanolamine + hexadecanoate + H(+). The enzyme catalyses 1-hexadecanoyl-2-(9Z-octadecenoyl)-sn-glycero-3-phospho-L-serine + H2O = 2-(9Z-octadecenoyl)-sn-glycero-3-phospho-L-serine + hexadecanoate + H(+). It catalyses the reaction 1-hexadecanoyl-2-(9Z-octadecenoyl)-sn-glycero-3-phosphocholine + H2O = 2-(9Z-octadecenoyl)-sn-glycero-3-phosphocholine + hexadecanoate + H(+). Diacylglycerol (DAG) and triacylglycerol (TAG) lipase that is required for proper lipid homeostasis in the central nervous system. It cooperates with PNPLA2/ATGL in neuronal TAG catabolism and hydrolyzes sn-1,3-DAG downstream of PNPLA2/ATGL. In vitro, also acts as a phospholipase that hydrolyzes preferentially phosphatidic acids, including 1,2-dioleoyl-sn-phosphatidic acid, phosphatidylcholine and phosphatidylethanolamine. Specifically binds to phosphatidylinositol 3-phosphate (PI(3)P), phosphatidylinositol 4-phosphate (PI(4)P), phosphatidylinositol 5-phosphate (PI(5)P) and possibly phosphatidylinositol 4,5-bisphosphate (PI(4,5)P2). May be involved in the maintenance of the endoplasmic reticulum and/or Golgi structures. May regulate the transport between Golgi apparatus and plasma membrane. This chain is Triacylglycerol hydrolase DDHD2, found in Mus musculus (Mouse).